The chain runs to 240 residues: Zein-alpha 19C1 (240 aa).

The first 21 residues, 1 to 21, serve as a signal peptide directing secretion; sequence MATKIFSLLMLLALSACVANA.

The protein belongs to the zein family.

Zeins are major seed storage proteins. The polypeptide is Zein-alpha 19C1 (Zea mays (Maize)).